Consider the following 101-residue polypeptide: NADH-quinone oxidoreductase subunit K (101 aa).

Transmembrane regions (helical) follow at residues 4 to 24, 29 to 49, and 61 to 81; these read VYDYLVLGVILFGLSLVGIML, IILLLVCVELMLLAVNTNFIA, and VFVFFILTVAAAEAAIGLAIV.

Belongs to the complex I subunit 4L family. NDH-1 is composed of 14 different subunits. Subunits NuoA, H, J, K, L, M, N constitute the membrane sector of the complex.

The protein localises to the cell inner membrane. It carries out the reaction a quinone + NADH + 5 H(+)(in) = a quinol + NAD(+) + 4 H(+)(out). Functionally, NDH-1 shuttles electrons from NADH, via FMN and iron-sulfur (Fe-S) centers, to quinones in the respiratory chain. The immediate electron acceptor for the enzyme in this species is believed to be ubiquinone. Couples the redox reaction to proton translocation (for every two electrons transferred, four hydrogen ions are translocated across the cytoplasmic membrane), and thus conserves the redox energy in a proton gradient. The chain is NADH-quinone oxidoreductase subunit K from Legionella pneumophila (strain Paris).